Reading from the N-terminus, the 362-residue chain is Endolytic peptidoglycan transglycosylase RlpA (362 aa).

The N-terminal stretch at 1-17 (MRKQWLGICIAAGMLAA) is a signal peptide. Cysteine 18 carries the N-palmitoyl cysteine lipid modification. Cysteine 18 is lipidated: S-diacylglycerol cysteine. The disordered stretch occupies residues 198-276 (PDLSGGAGTS…PSTTPATSPA (79 aa)). Positions 262-276 (PVVTAPSTTPATSPA) are enriched in low complexity. Positions 285–361 (QSASGNFMVQ…AQLQSFITTA (77 aa)) constitute an SPOR domain.

It belongs to the RlpA family.

It is found in the cell membrane. Its function is as follows. Lytic transglycosylase with a strong preference for naked glycan strands that lack stem peptides. The polypeptide is Endolytic peptidoglycan transglycosylase RlpA (Escherichia coli O157:H7).